The chain runs to 163 residues: MADSSFDVVSKVDRQEVDNALHQAEKELNTRYDFRGTGAKIEWSGEDKIVLTAEAEERVKAALEVFKEKLIRRDISLKAFDAGEPVASGKTYKITGTLVQGIDAEHAKKISKKIRDEGPKGVKAQIQGDELRVSSKKRDDLQAVIALLKSEDFGIALQFVNYR.

The protein belongs to the YajQ family.

Its function is as follows. Nucleotide-binding protein. The chain is Nucleotide-binding protein NFA_51200 from Nocardia farcinica (strain IFM 10152).